A 227-amino-acid polypeptide reads, in one-letter code: UPF0173 metal-dependent hydrolase BCG9842_B0515 (227 aa).

It belongs to the UPF0173 family.

The polypeptide is UPF0173 metal-dependent hydrolase BCG9842_B0515 (Bacillus cereus (strain G9842)).